The following is a 314-amino-acid chain: DNA-directed RNA polymerase subunit alpha (314 aa).

Positions 1–227 (MTKFEIECVE…ELLHPLKEIN (227 aa)) are alpha N-terminal domain (alpha-NTD). The interval 241 to 314 (KINQILIEEL…LPKEKTVKPN (74 aa)) is alpha C-terminal domain (alpha-CTD).

It belongs to the RNA polymerase alpha chain family. In terms of assembly, in plastids the minimal PEP RNA polymerase catalytic core is composed of four subunits: alpha, beta, beta', and beta''. When a (nuclear-encoded) sigma factor is associated with the core the holoenzyme is formed, which can initiate transcription.

It is found in the plastid. It localises to the chloroplast. The enzyme catalyses RNA(n) + a ribonucleoside 5'-triphosphate = RNA(n+1) + diphosphate. Functionally, DNA-dependent RNA polymerase catalyzes the transcription of DNA into RNA using the four ribonucleoside triphosphates as substrates. The sequence is that of DNA-directed RNA polymerase subunit alpha from Rhodomonas salina (Cryptomonas salina).